Consider the following 1755-residue polypeptide: Transposon Ty1-GR2 Gag-Pol polyprotein (1755 aa).

Positions 1-16 (MESQQLSQHSHISHGS) are enriched in low complexity. 3 disordered regions span residues 1 to 93 (MESQ…MMTQ), 126 to 173 (PQSQ…RPPP), and 352 to 421 (GSRN…SKST). Polar residues-rich tracts occupy residues 48–60 (TKAN…TPAS) and 127–152 (QSQF…GNTF). Low complexity predominate over residues 153–165 (TDSSSADSDMTST). An RNA-binding region spans residues 299–401 (NNGIHINNKV…NSKSKTARAH (103 aa)). The segment covering 402–418 (NVSTSNNSPSTDNDSIS) has biased composition (low complexity). S416 is subject to Phosphoserine. The active-site For protease activity; shared with dimeric partner is the D461. An integrase-type zinc finger-like region spans residues 583 to 640 (NVHTSESTRKYPYPFIHRMLAHANAQTIRYSLKNNTITYFNESDVDWSSAIDYQCPDC). Positions 660–835 (NSYEPFQYLH…AGLDISTLLP (176 aa)) constitute an Integrase catalytic domain. Residues D671 and D736 each coordinate Mg(2+). Disordered stretches follow at residues 956 to 1087 (SKAV…ETEK), 1092 to 1111 (RSPS…NIVP), and 1130 to 1187 (DLPL…DNET). The span at 960-969 (SPTDSTPPST) shows a compositional bias: low complexity. A compositionally biased stretch (polar residues) spans 1005-1015 (STPQISNIEST). Over residues 1038–1053 (ESSHASKSKDFRHSDS) the composition is skewed to basic and acidic residues. 2 stretches are compositionally biased toward polar residues: residues 1054–1082 (YSEN…QISD) and 1101–1111 (PENNSSHNIVP). A Bipartite nuclear localization signal motif is present at residues 1178–1212 (KKRSLEDNETEIKVSRDTWNTKNMRSLEPPRSKKR). Positions 1338–1476 (NNYYITQLDI…DILGLEIKYQ (139 aa)) constitute a Reverse transcriptase Ty1/copia-type domain. The Mg(2+) site is built by D1346, D1427, D1428, D1610, E1652, and D1685. Residues 1610 to 1752 (DASYGNQPYY…IKTFKLLTNK (143 aa)) form the RNase H Ty1/copia-type domain.

In terms of assembly, the capsid protein forms a homotrimer, from which the VLPs are assembled. The protease is a homodimer, whose active site consists of two apposed aspartic acid residues. In terms of processing, initially, virus-like particles (VLPs) are composed of the structural unprocessed proteins Gag and Gag-Pol, and also contain the host initiator methionine tRNA (tRNA(i)-Met) which serves as a primer for minus-strand DNA synthesis, and a dimer of genomic Ty RNA. Processing of the polyproteins occurs within the particle and proceeds by an ordered pathway, called maturation. First, the protease (PR) is released by autocatalytic cleavage of the Gag-Pol polyprotein yielding capsid protein p45 and a Pol-p154 precursor protein. This cleavage is a prerequisite for subsequent processing of Pol-p154 at the remaining sites to release the mature structural and catalytic proteins. Maturation takes place prior to the RT reaction and is required to produce transposition-competent VLPs.

It is found in the cytoplasm. Its subcellular location is the nucleus. It catalyses the reaction DNA(n) + a 2'-deoxyribonucleoside 5'-triphosphate = DNA(n+1) + diphosphate. The enzyme catalyses Endonucleolytic cleavage to 5'-phosphomonoester.. Its function is as follows. Capsid protein (CA) is the structural component of the virus-like particle (VLP), forming the shell that encapsulates the retrotransposons dimeric RNA genome. The particles are assembled from trimer-clustered units and there are holes in the capsid shells that allow for the diffusion of macromolecules. CA also has nucleocapsid-like chaperone activity, promoting primer tRNA(i)-Met annealing to the multipartite primer-binding site (PBS), dimerization of Ty1 RNA and initiation of reverse transcription. The aspartyl protease (PR) mediates the proteolytic cleavages of the Gag and Gag-Pol polyproteins after assembly of the VLP. Functionally, reverse transcriptase/ribonuclease H (RT) is a multifunctional enzyme that catalyzes the conversion of the retro-elements RNA genome into dsDNA within the VLP. The enzyme displays a DNA polymerase activity that can copy either DNA or RNA templates, and a ribonuclease H (RNase H) activity that cleaves the RNA strand of RNA-DNA heteroduplexes during plus-strand synthesis and hydrolyzes RNA primers. The conversion leads to a linear dsDNA copy of the retrotransposon that includes long terminal repeats (LTRs) at both ends. In terms of biological role, integrase (IN) targets the VLP to the nucleus, where a subparticle preintegration complex (PIC) containing at least integrase and the newly synthesized dsDNA copy of the retrotransposon must transit the nuclear membrane. Once in the nucleus, integrase performs the integration of the dsDNA into the host genome. This chain is Transposon Ty1-GR2 Gag-Pol polyprotein (TY1B-GR2), found in Saccharomyces cerevisiae (strain ATCC 204508 / S288c) (Baker's yeast).